The sequence spans 204 residues: tRNA (guanine-N(7)-)-methyltransferase (204 aa).

The S-adenosyl-L-methionine site is built by Glu36, Glu61, and Asp111. The active site involves Asp111. Residues Lys115, Asp147, and 177–180 each bind substrate; that span reads TRFE.

This sequence belongs to the class I-like SAM-binding methyltransferase superfamily. TrmB family.

The catalysed reaction is guanosine(46) in tRNA + S-adenosyl-L-methionine = N(7)-methylguanosine(46) in tRNA + S-adenosyl-L-homocysteine. Its pathway is tRNA modification; N(7)-methylguanine-tRNA biosynthesis. Its function is as follows. Catalyzes the formation of N(7)-methylguanine at position 46 (m7G46) in tRNA. The polypeptide is tRNA (guanine-N(7)-)-methyltransferase (Chlorobium phaeobacteroides (strain DSM 266 / SMG 266 / 2430)).